Consider the following 313-residue polypeptide: Adhesin MafA 2 (313 aa).

The signal sequence occupies residues 1 to 14; it reads MKTLLLLIPLVLTA. Cys-15 carries N-palmitoyl cysteine lipidation. Cys-15 carries S-diacylglycerol cysteine lipidation. The segment covering 282 to 297 has biased composition (polar residues); that stretch reads GDTTAQNRPDFKQNNG. Residues 282–313 form a disordered region; the sequence is GDTTAQNRPDFKQNNGKKPDVGNEVIRRRKGG.

The protein belongs to the MafA family.

The protein resides in the cell outer membrane. This chain is Adhesin MafA 2 (mafA2), found in Neisseria meningitidis serogroup A / serotype 4A (strain DSM 15465 / Z2491).